Reading from the N-terminus, the 211-residue chain is 3,4-dihydroxy-2-butanone 4-phosphate synthase (211 aa).

D-ribulose 5-phosphate-binding positions include 37-38, Asp-42, 150-154, and Glu-174; these read RE and RIGHT. Glu-38 is a Mg(2+) binding site. His-153 is a Mg(2+) binding site.

Belongs to the DHBP synthase family. As to quaternary structure, homodimer. The cofactor is Mg(2+). Mn(2+) is required as a cofactor.

The enzyme catalyses D-ribulose 5-phosphate = (2S)-2-hydroxy-3-oxobutyl phosphate + formate + H(+). Its pathway is cofactor biosynthesis; riboflavin biosynthesis; 2-hydroxy-3-oxobutyl phosphate from D-ribulose 5-phosphate: step 1/1. Its function is as follows. Catalyzes the conversion of D-ribulose 5-phosphate to formate and 3,4-dihydroxy-2-butanone 4-phosphate. The protein is 3,4-dihydroxy-2-butanone 4-phosphate synthase of Buchnera aphidicola subsp. Baizongia pistaciae (strain Bp).